The following is a 230-amino-acid chain: Calcyclin-binding protein (230 aa).

Positions 1–82 (MSSALEELQK…YTVKISNYGW (82 aa)) are interaction with SIAH1. Residue Ser-3 is modified to Phosphoserine. Lys-10 and Lys-21 each carry N6-acetyllysine. Ser-36 is subject to Phosphoserine. The tract at residues 38–59 (IETEMKNKMQQKSQRKAELTEN) is disordered. Residues 75–169 (VKISNYGWDQ…AENTRWDYLT (95 aa)) enclose the CS domain. An interaction with SKP1 region spans residues 75–230 (VKISNYGWDQ…EKQAKGDTDF (156 aa)). An N6-acetyllysine mark is found at Lys-87 and Lys-120. An interaction with S100A6 region spans residues 156 to 230 (CRKKAENTRW…EKQAKGDTDF (75 aa)). Positions 170 to 230 (QVEKECKEKE…EKQAKGDTDF (61 aa)) constitute an SGS domain.

In terms of assembly, monomer or homodimer. Component of some large E3 complex at least composed of UBE2D1, SIAH1, CACYBP/SIP, SKP1, APC and TBL1X. Interacts directly with SIAH1, SIAH2 and SKP1. Interacts with proteins of the S100 family S100A1, S100A6, S100B, S100P and S100A12 in a calcium-dependent manner. In terms of processing, phosphorylated on serine residues. Phosphorylated upon induction by RA or at high calcium concentrations.

The protein resides in the nucleus. It localises to the cytoplasm. In terms of biological role, may be involved in calcium-dependent ubiquitination and subsequent proteasomal degradation of target proteins. Probably serves as a molecular bridge in ubiquitin E3 complexes. Participates in the ubiquitin-mediated degradation of beta-catenin (CTNNB1). This Bos taurus (Bovine) protein is Calcyclin-binding protein (CACYBP).